We begin with the raw amino-acid sequence, 277 residues long: Sulfur carrier protein FdhD (277 aa).

Cysteine 121 serves as the catalytic Cysteine persulfide intermediate. 260–265 serves as a coordination point for Mo-bis(molybdopterin guanine dinucleotide); the sequence is FCKPGR.

It belongs to the FdhD family.

The protein localises to the cytoplasm. Its function is as follows. Required for formate dehydrogenase (FDH) activity. Acts as a sulfur carrier protein that transfers sulfur from IscS to the molybdenum cofactor prior to its insertion into FDH. This is Sulfur carrier protein FdhD from Shigella flexneri serotype 5b (strain 8401).